A 146-amino-acid chain; its full sequence is UPF0260 protein Ssed_2516 (146 aa).

Belongs to the UPF0260 family.

This is UPF0260 protein Ssed_2516 from Shewanella sediminis (strain HAW-EB3).